A 638-amino-acid chain; its full sequence is Cytoplasmic dynein 1 intermediate chain 2 (638 aa).

Basic and acidic residues-rich tracts occupy residues 1–13 (MSDK…ELER) and 20–43 (QIRE…KKEA). Disordered stretches follow at residues 1-135 (MSDK…GRGP) and 155-214 (TYTK…EEKQ). S2 bears the N-acetylserine mark. The residue at position 51 (S51) is a Diphosphoserine. Phosphoserine occurs at positions 51, 73, 81, 84, and 90. The span at 88–97 (PSSKSVSTPS) shows a compositional bias: low complexity. Residue T95 is modified to Phosphothreonine. Phosphoserine occurs at positions 97, 101, and 104. The segment covering 190 to 214 (EKTLKKDEENDSKAPPHELTEEEKQ) has biased composition (basic and acidic residues). WD repeat units follow at residues 277–326 (SKHR…TTPE), 330–370 (HCQS…RTPV), 379–420 (AHTH…HPQD), 429–469 (SKAV…AGIS), 474–519 (GHQG…PLYS), 522–562 (DNAD…EVPT), and 568–607 (EGNP…AVPR).

Belongs to the dynein intermediate chain family. Homodimer. The cytoplasmic dynein 1 complex consists of two catalytic heavy chains (HCs) and a number of non-catalytic subunits presented by intermediate chains (ICs), light intermediate chains (LICs) and light chains (LCs); the composition seems to vary in respect to the IC, LIC and LC composition. The heavy chain homodimer serves as a scaffold for the probable homodimeric assembly of the respective non-catalytic subunits. The ICs and LICs bind directly to the HC dimer and the LCs assemble on the IC dimer. Interacts with DYNLT3. Interacts with DYNLT1. Interacts (dephosphorylated at Ser-90) with DCTN1. Interacts with BICD2. Interacts with SPEF2. Interacts with CFAP61. As to quaternary structure, (Microbial infection) Interacts with human adenovirus 5 hexon protein; this interaction probably allows virus intracellular transport. The phosphorylation status of Ser-90 appears to be involved in dynactin-dependent target binding. Post-translationally, pyrophosphorylation by 5-diphosphoinositol pentakisphosphate (5-IP7) promotes interaction with DCTN1. Serine pyrophosphorylation is achieved by Mg(2+)-dependent, but enzyme independent transfer of a beta-phosphate from a inositol pyrophosphate to a pre-phosphorylated serine residue.

It is found in the cytoplasm. Its subcellular location is the cytoskeleton. Acts as one of several non-catalytic accessory components of the cytoplasmic dynein 1 complex that are thought to be involved in linking dynein to cargos and to adapter proteins that regulate dynein function. Cytoplasmic dynein 1 acts as a motor for the intracellular retrograde motility of vesicles and organelles along microtubules. The intermediate chains mediate the binding of dynein to dynactin via its 150 kDa component (p150-glued) DCTN1. Involved in membrane-transport, such as Golgi apparatus, late endosomes and lysosomes. The chain is Cytoplasmic dynein 1 intermediate chain 2 from Homo sapiens (Human).